Consider the following 509-residue polypeptide: Bifunctional purine biosynthesis protein PurH (509 aa).

An MGS-like domain is found at 1–146 (MTIQKINRVL…KNWYRVGVCV (146 aa)).

It belongs to the PurH family.

The enzyme catalyses (6R)-10-formyltetrahydrofolate + 5-amino-1-(5-phospho-beta-D-ribosyl)imidazole-4-carboxamide = 5-formamido-1-(5-phospho-D-ribosyl)imidazole-4-carboxamide + (6S)-5,6,7,8-tetrahydrofolate. It carries out the reaction IMP + H2O = 5-formamido-1-(5-phospho-D-ribosyl)imidazole-4-carboxamide. It participates in purine metabolism; IMP biosynthesis via de novo pathway; 5-formamido-1-(5-phospho-D-ribosyl)imidazole-4-carboxamide from 5-amino-1-(5-phospho-D-ribosyl)imidazole-4-carboxamide (10-formyl THF route): step 1/1. Its pathway is purine metabolism; IMP biosynthesis via de novo pathway; IMP from 5-formamido-1-(5-phospho-D-ribosyl)imidazole-4-carboxamide: step 1/1. The protein is Bifunctional purine biosynthesis protein PurH of Natranaerobius thermophilus (strain ATCC BAA-1301 / DSM 18059 / JW/NM-WN-LF).